The following is a 242-amino-acid chain: Beta-glucanase (242 aa).

A signal peptide spans 1–28 (MPYLKRVLLLLVTGLFMSLFAVTATASA). A Pyrrolidone carboxylic acid modification is found at Q29. In terms of domain architecture, GH16 spans 29 to 242 (QTGGSFFDPF…HYDWVRYTKK (214 aa)). C60 and C89 are disulfide-bonded. The active-site Nucleophile is E133. E137 serves as the catalytic Proton donor.

This sequence belongs to the glycosyl hydrolase 16 family.

It is found in the secreted. The enzyme catalyses Hydrolysis of (1-&gt;4)-beta-D-glucosidic linkages in beta-D-glucans containing (1-&gt;3)- and (1-&gt;4)-bonds.. The polypeptide is Beta-glucanase (bglS) (Bacillus subtilis (strain 168)).